The primary structure comprises 244 residues: Orotidine 5'-phosphate decarboxylase (244 aa).

Substrate is bound by residues Asp-20, Lys-42, 70 to 79 (DLKFFDIPAT), Thr-125, Arg-186, Gln-195, Gly-215, and Arg-216. Residue Lys-72 is the Proton donor of the active site.

This sequence belongs to the OMP decarboxylase family. Type 1 subfamily. Homodimer.

It catalyses the reaction orotidine 5'-phosphate + H(+) = UMP + CO2. It participates in pyrimidine metabolism; UMP biosynthesis via de novo pathway; UMP from orotate: step 2/2. Its function is as follows. Catalyzes the decarboxylation of orotidine 5'-monophosphate (OMP) to uridine 5'-monophosphate (UMP). The sequence is that of Orotidine 5'-phosphate decarboxylase from Xylella fastidiosa (strain M12).